A 119-amino-acid chain; its full sequence is Fluoride-specific ion channel FluC 1 (119 aa).

The next 4 helical transmembrane spans lie at 6-26 (VALV…IAVV), 31-51 (FPWG…AIVY), 66-86 (VVAT…GETI), and 91-111 (RLAA…VLVA).

It belongs to the fluoride channel Fluc/FEX (TC 1.A.43) family.

Its subcellular location is the cell membrane. It carries out the reaction fluoride(in) = fluoride(out). Fluoride-specific ion channel. Important for reducing fluoride concentration in the cell, thus reducing its toxicity. The polypeptide is Fluoride-specific ion channel FluC 1 (Natronomonas pharaonis (strain ATCC 35678 / DSM 2160 / CIP 103997 / JCM 8858 / NBRC 14720 / NCIMB 2260 / Gabara) (Halobacterium pharaonis)).